The primary structure comprises 101 residues: UPF0235 protein Maeo_0841 (101 aa).

Belongs to the UPF0235 family.

This is UPF0235 protein Maeo_0841 from Methanococcus aeolicus (strain ATCC BAA-1280 / DSM 17508 / OCM 812 / Nankai-3).